Consider the following 398-residue polypeptide: Phytoene synthase 2, chloroplastic (398 aa).

The transit peptide at 1-80 (MASSSSAAAL…EEAVYEVVLR (80 aa)) directs the protein to the chloroplast.

It belongs to the phytoene/squalene synthase family. Expressed in leaves and endosperm. Expressed in developing leaves.

Its subcellular location is the plastid. The protein resides in the chloroplast membrane. It is found in the chloroplast. The protein localises to the plastoglobule. The enzyme catalyses 2 (2E,6E,10E)-geranylgeranyl diphosphate = 15-cis-phytoene + 2 diphosphate. In terms of biological role, catalyzes the conversion of geranylgeranyl diphosphate to phytoene. Mediates the first committed step in carotenoid biosynthesis. This is Phytoene synthase 2, chloroplastic from Oryza sativa subsp. japonica (Rice).